Consider the following 544-residue polypeptide: Chaperonin GroEL 1 (544 aa).

ATP is bound by residues 29 to 32, Lys50, 86 to 90, Gly414, and Asp494; these read TLGP and DGTTT.

Belongs to the chaperonin (HSP60) family. As to quaternary structure, forms a cylinder of 14 subunits composed of two heptameric rings stacked back-to-back. Interacts with the co-chaperonin GroES.

The protein localises to the cytoplasm. It catalyses the reaction ATP + H2O + a folded polypeptide = ADP + phosphate + an unfolded polypeptide.. Together with its co-chaperonin GroES, plays an essential role in assisting protein folding. The GroEL-GroES system forms a nano-cage that allows encapsulation of the non-native substrate proteins and provides a physical environment optimized to promote and accelerate protein folding. In Psychromonas ingrahamii (strain DSM 17664 / CCUG 51855 / 37), this protein is Chaperonin GroEL 1.